Reading from the N-terminus, the 884-residue chain is Pyruvate, phosphate dikinase (884 aa).

The tract at residues 1 to 351 (MSTRRVYFFG…LWMLQARAGK (351 aa)) is N-terminal. Arg99 is an ATP binding site. The segment at 352 to 408 (RTGFAMVRIAIDMCKEGMLTEEEALLRIDANKINEFLFKRFDPSVKPVVLGKGIPAS) is linker 1. The interval 409–507 (PGAAVGVICF…KFKEGDFISI (99 aa)) is central. Thr462 carries the phosphothreonine; by PDRP1 modification. His464 (tele-phosphohistidine intermediate) is an active-site residue. Positions 508 to 542 (NGTTGEIYNGAVQTIEPGITDDLQTIMDWSDKYRV) are linker 2. The C-terminal stretch occupies residues 543-884 (LKIRTNADTP…IAAIKARTNQ (342 aa)). Substrate is bound by residues Arg570, Arg626, Glu753, Gly774, Thr775, Asn776, and Asp777. Glu753 is a Mg(2+) binding site. Asp777 provides a ligand contact to Mg(2+). Cys839 acts as the Proton donor in catalysis.

This sequence belongs to the PEP-utilizing enzyme family. As to quaternary structure, homodimer. Mg(2+) serves as cofactor. Phosphorylation of Thr-462 in the dark inactivates the enzyme. Dephosphorylation upon light stimulation reactivates the enzyme.

The enzyme catalyses pyruvate + phosphate + ATP = phosphoenolpyruvate + AMP + diphosphate + H(+). Its activity is regulated as follows. Activated by light-induced dephosphorylation. Inhibited by dark-induced phosphorylation. Both reactions are catalyzed by PDRP1. Its function is as follows. Catalyzes the reversible phosphorylation of pyruvate and phosphate. This chain is Pyruvate, phosphate dikinase, found in Giardia intestinalis (Giardia lamblia).